Reading from the N-terminus, the 295-residue chain is Tyrosine recombinase XerC (295 aa).

Positions 1–85 (MQNALQKYYD…ALRQFLAYLV (85 aa)) constitute a Core-binding (CB) domain. Residues 106 to 285 (YLPKNIDQEQ…DFKHLTDVYD (180 aa)) form the Tyr recombinase domain. Active-site residues include arginine 145, lysine 169, histidine 237, arginine 240, and histidine 263. The active-site O-(3'-phospho-DNA)-tyrosine intermediate is tyrosine 272.

It belongs to the 'phage' integrase family. XerC subfamily. As to quaternary structure, forms a cyclic heterotetrameric complex composed of two molecules of XerC and two molecules of XerD.

The protein localises to the cytoplasm. Functionally, site-specific tyrosine recombinase, which acts by catalyzing the cutting and rejoining of the recombining DNA molecules. The XerC-XerD complex is essential to convert dimers of the bacterial chromosome into monomers to permit their segregation at cell division. It also contributes to the segregational stability of plasmids. The chain is Tyrosine recombinase XerC from Actinobacillus succinogenes (strain ATCC 55618 / DSM 22257 / CCUG 43843 / 130Z).